The following is a 440-amino-acid chain: Trigger factor (440 aa).

The 97-residue stretch at 161 to 257 (GDYVKLAYEG…VLEVRERVLP (97 aa)) folds into the PPIase FKBP-type domain.

The protein belongs to the FKBP-type PPIase family. Tig subfamily.

The protein resides in the cytoplasm. It catalyses the reaction [protein]-peptidylproline (omega=180) = [protein]-peptidylproline (omega=0). Functionally, involved in protein export. Acts as a chaperone by maintaining the newly synthesized protein in an open conformation. Functions as a peptidyl-prolyl cis-trans isomerase. The polypeptide is Trigger factor (Opitutus terrae (strain DSM 11246 / JCM 15787 / PB90-1)).